Reading from the N-terminus, the 458-residue chain is Gamma aminobutyrate transaminase 2 (458 aa).

114-115 (GS) contributes to the pyridoxal 5'-phosphate binding site. Tyr147 serves as a coordination point for substrate. Asp254 is a pyridoxal 5'-phosphate binding site. Lys283 lines the substrate pocket. Lys283 bears the N6-(pyridoxal phosphate)lysine mark.

The protein belongs to the class-III pyridoxal-phosphate-dependent aminotransferase family. Expressed in leaves, roots, stems, flowers and fruits. Expressed in carpels, but not in stamens.

Its subcellular location is the cytoplasm. The enzyme catalyses 4-aminobutanoate + pyruvate = succinate semialdehyde + L-alanine. It catalyses the reaction 4-aminobutanoate + glyoxylate = succinate semialdehyde + glycine. In terms of biological role, transaminase that degrades gamma-amino butyric acid (GABA) and uses pyruvate or glyoxylate as amino-group acceptor. Cannot use beta-alanine, ornithine, acetylornithine, serine, glycine, asparagine, glutamine, glutamate, valine, leucine, isoleucine, methionine, phenylalanine, histidine, lysine, arginine, aspartate, threonine, tyrosine, tryptophan, proline, or cysteine as amino donors. May be responsible for establishing the GABA gradient in the carpel. This is Gamma aminobutyrate transaminase 2 (GABA-TP2) from Solanum lycopersicum (Tomato).